The primary structure comprises 241 residues: Pre-rRNA-processing protein pno1 (241 aa).

The tract at residues 48–71 (APAKTSAEKKRGAKPQMRRVPIPP) is disordered. Threonine 52 bears the Phosphothreonine mark. Residues 162 to 214 (GDHLSRAIGRIAGQGGKTKFAIENASRTRIVLADSKIHILGGFTNIRIAKDAV) enclose the KH domain.

The protein belongs to the PNO1 family. As to quaternary structure, component of the small ribosomal subunit, ribosomal RNA processing complex (SSU RRP complex).

It is found in the cytoplasm. It localises to the nucleus. The protein resides in the nucleolus. Functionally, required for small ribosomal subunit (SSU) synthesis. Has a role in the processing of early nucleolar and late cytoplasmic pre-RNA species. This chain is Pre-rRNA-processing protein pno1 (rbp28), found in Schizosaccharomyces pombe (strain 972 / ATCC 24843) (Fission yeast).